The primary structure comprises 458 residues: Oxysterol-binding protein-related protein 3B (458 aa).

Disordered regions lie at residues 47–66, 370–401, and 431–458; these read VINPEGSTDDAEEEASRGRW, DMSKSGYEKSSMEERQRAEKRTREEKGQAFTP, and RAAADNSEDNTDPKSIQFNPWQFQDLST. A compositionally biased stretch (basic and acidic residues) spans 375-396; the sequence is GYEKSSMEERQRAEKRTREEKG. Polar residues predominate over residues 443–458; sequence PKSIQFNPWQFQDLST.

Belongs to the OSBP family. As to expression, expressed in roots, leaves, stems and flowers.

Functionally, may be involved in the transport of sterols. This chain is Oxysterol-binding protein-related protein 3B (ORP3B), found in Arabidopsis thaliana (Mouse-ear cress).